We begin with the raw amino-acid sequence, 226 residues long: Small ribosomal subunit protein uS3 (226 aa).

In terms of domain architecture, KH type-2 spans 39-107 (IRAYIKKNVV…EVTLNIKEVK (69 aa)).

Belongs to the universal ribosomal protein uS3 family. Part of the 30S ribosomal subunit. Forms a tight complex with proteins S10 and S14.

Its function is as follows. Binds the lower part of the 30S subunit head. Binds mRNA in the 70S ribosome, positioning it for translation. In Pelagibacter ubique (strain HTCC1062), this protein is Small ribosomal subunit protein uS3.